A 445-amino-acid polypeptide reads, in one-letter code: Phosphoglucosamine mutase (445 aa).

Residue Ser103 is the Phosphoserine intermediate of the active site. Mg(2+)-binding residues include Ser103, Asp240, Asp242, and Asp244. Ser103 is subject to Phosphoserine.

Belongs to the phosphohexose mutase family. Mg(2+) serves as cofactor. In terms of processing, activated by phosphorylation.

It catalyses the reaction alpha-D-glucosamine 1-phosphate = D-glucosamine 6-phosphate. In terms of biological role, catalyzes the conversion of glucosamine-6-phosphate to glucosamine-1-phosphate. The chain is Phosphoglucosamine mutase from Cellvibrio japonicus (strain Ueda107) (Pseudomonas fluorescens subsp. cellulosa).